A 315-amino-acid chain; its full sequence is Probable integrase/recombinase aq_aa09 (315 aa).

In terms of domain architecture, Core-binding (CB) spans 1-78; that stretch reads MEHFIDTYLY…EVRLFYEWLQ (78 aa). The Tyr recombinase domain occupies 106 to 313; the sequence is SKKKYYSDDE…REKQLEAILE (208 aa). Catalysis depends on residues Arg-150, Lys-186, His-263, Arg-266, and His-289. Residue Tyr-299 is the O-(3'-phospho-DNA)-tyrosine intermediate of the active site.

Belongs to the 'phage' integrase family.

May function as an integrase. The sequence is that of Probable integrase/recombinase aq_aa09 from Aquifex aeolicus (strain VF5).